Reading from the N-terminus, the 236-residue chain is Protein EVI2A (236 aa).

The signal sequence occupies residues M1 to A30. Residues N31, N38, N49, N73, and N112 are each glycosylated (N-linked (GlcNAc...) asparagine). The Extracellular portion of the chain corresponds to N31–M133. A helical transmembrane segment spans residues A134 to L154. The Cytoplasmic portion of the chain corresponds to S155 to G236. Phosphoserine is present on S211. The disordered stretch occupies residues A217–G236. Positions T218–G236 are enriched in basic and acidic residues.

This sequence belongs to the EVI2A family.

It is found in the membrane. In terms of biological role, may complex with itself or/and other proteins within the membrane, to function as part of a cell-surface receptor. This Homo sapiens (Human) protein is Protein EVI2A (EVI2A).